The primary structure comprises 203 residues: Small ribosomal subunit protein uS4 (203 aa).

The 61-residue stretch at 93–153 (RRFDNVVFRA…QKSQNLDAVA (61 aa)) folds into the S4 RNA-binding domain.

The protein belongs to the universal ribosomal protein uS4 family. Part of the 30S ribosomal subunit. Contacts protein S5. The interaction surface between S4 and S5 is involved in control of translational fidelity.

In terms of biological role, one of the primary rRNA binding proteins, it binds directly to 16S rRNA where it nucleates assembly of the body of the 30S subunit. Its function is as follows. With S5 and S12 plays an important role in translational accuracy. In Chlorobium phaeobacteroides (strain BS1), this protein is Small ribosomal subunit protein uS4.